Consider the following 277-residue polypeptide: Large ribosomal subunit protein uL2c (277 aa).

Disordered regions lie at residues 24–57 and 226–266; these read IVQS…RGGG and NAAD…HKYS.

The protein belongs to the universal ribosomal protein uL2 family. As to quaternary structure, part of the 50S ribosomal subunit.

The protein localises to the plastid. It localises to the chloroplast. The sequence is that of Large ribosomal subunit protein uL2c (rpl2) from Zygnema circumcarinatum (Green alga).